The chain runs to 147 residues: Large ribosomal subunit protein uL13 (147 aa).

Belongs to the universal ribosomal protein uL13 family. In terms of assembly, part of the 50S ribosomal subunit.

This protein is one of the early assembly proteins of the 50S ribosomal subunit, although it is not seen to bind rRNA by itself. It is important during the early stages of 50S assembly. The sequence is that of Large ribosomal subunit protein uL13 from Lactobacillus johnsonii (strain CNCM I-12250 / La1 / NCC 533).